Reading from the N-terminus, the 224-residue chain is Phosphoribosylformylglycinamidine synthase subunit PurQ (224 aa).

The Glutamine amidotransferase type-1 domain maps to 1–224 (MIAIIKFPGT…ILLRRLGEWA (224 aa)). Cys84 functions as the Nucleophile in the catalytic mechanism. Residues His196 and Glu198 contribute to the active site.

As to quaternary structure, part of the FGAM synthase complex composed of 1 PurL, 1 PurQ and 2 PurS subunits.

It is found in the cytoplasm. It carries out the reaction N(2)-formyl-N(1)-(5-phospho-beta-D-ribosyl)glycinamide + L-glutamine + ATP + H2O = 2-formamido-N(1)-(5-O-phospho-beta-D-ribosyl)acetamidine + L-glutamate + ADP + phosphate + H(+). The enzyme catalyses L-glutamine + H2O = L-glutamate + NH4(+). It functions in the pathway purine metabolism; IMP biosynthesis via de novo pathway; 5-amino-1-(5-phospho-D-ribosyl)imidazole from N(2)-formyl-N(1)-(5-phospho-D-ribosyl)glycinamide: step 1/2. Functionally, part of the phosphoribosylformylglycinamidine synthase complex involved in the purines biosynthetic pathway. Catalyzes the ATP-dependent conversion of formylglycinamide ribonucleotide (FGAR) and glutamine to yield formylglycinamidine ribonucleotide (FGAM) and glutamate. The FGAM synthase complex is composed of three subunits. PurQ produces an ammonia molecule by converting glutamine to glutamate. PurL transfers the ammonia molecule to FGAR to form FGAM in an ATP-dependent manner. PurS interacts with PurQ and PurL and is thought to assist in the transfer of the ammonia molecule from PurQ to PurL. The polypeptide is Phosphoribosylformylglycinamidine synthase subunit PurQ (Saccharolobus solfataricus (strain ATCC 35092 / DSM 1617 / JCM 11322 / P2) (Sulfolobus solfataricus)).